A 156-amino-acid polypeptide reads, in one-letter code: 6,7-dimethyl-8-ribityllumazine synthase (156 aa).

Residues Phe22, 57 to 59, and 81 to 83 each bind 5-amino-6-(D-ribitylamino)uracil; these read AYE and SVI. 86 to 87 provides a ligand contact to (2S)-2-hydroxy-3-oxobutyl phosphate; it reads GT. His89 (proton donor) is an active-site residue. Phe114 provides a ligand contact to 5-amino-6-(D-ribitylamino)uracil. Arg128 lines the (2S)-2-hydroxy-3-oxobutyl phosphate pocket.

Belongs to the DMRL synthase family. As to quaternary structure, forms an icosahedral capsid composed of 60 subunits, arranged as a dodecamer of pentamers.

The catalysed reaction is (2S)-2-hydroxy-3-oxobutyl phosphate + 5-amino-6-(D-ribitylamino)uracil = 6,7-dimethyl-8-(1-D-ribityl)lumazine + phosphate + 2 H2O + H(+). The protein operates within cofactor biosynthesis; riboflavin biosynthesis; riboflavin from 2-hydroxy-3-oxobutyl phosphate and 5-amino-6-(D-ribitylamino)uracil: step 1/2. Catalyzes the formation of 6,7-dimethyl-8-ribityllumazine by condensation of 5-amino-6-(D-ribitylamino)uracil with 3,4-dihydroxy-2-butanone 4-phosphate. This is the penultimate step in the biosynthesis of riboflavin. The protein is 6,7-dimethyl-8-ribityllumazine synthase of Photobacterium leiognathi.